The primary structure comprises 712 residues: Lactoperoxidase (712 aa).

The signal sequence occupies residues 1 to 26 (MRVLLHLPALLASLILLQAAASTTRA). Positions 27 to 80 (QTTRTSAISDTVSQAKVQVNKAFLDSRTRLKTAMSSETPTSRQLSEYLKHAKGR) are excised as a propeptide. Asn-106 carries N-linked (GlcNAc...) asparagine glycosylation. Cys-132 and Cys-145 are joined by a disulfide. N-linked (GlcNAc...) asparagine glycosylation is present at Asn-212. Asp-225 contacts heme b. Catalysis depends on His-226, which acts as the Proton acceptor. Asp-227 contacts Ca(2+). Intrachain disulfides connect Cys-246/Cys-256 and Cys-250/Cys-274. Residues Thr-301, Phe-303, Asp-305, and Ser-307 each contribute to the Ca(2+) site. Ser-315 bears the Phosphoserine mark. Asn-322 and Asn-358 each carry an N-linked (GlcNAc...) asparagine glycan. A disulfide bridge links Cys-354 with Cys-365. Heme b contacts are provided by Glu-375 and His-468. At Tyr-482 the chain carries 3'-nitrotyrosine. 2 cysteine pairs are disulfide-bonded: Cys-573–Cys-630 and Cys-671–Cys-696.

The protein belongs to the peroxidase family. XPO subfamily. Requires Ca(2+) as cofactor. Heme b is required as a cofactor. As to expression, mammary gland, milk and salivary gland. Found in bronchial submucosal glands.

It is found in the secreted. It localises to the cytoplasm. The catalysed reaction is 2 a phenolic donor + H2O2 = 2 a phenolic radical donor + 2 H2O. It catalyses the reaction thiocyanate + H2O2 + H(+) = hypothiocyanous acid + H2O. It carries out the reaction iodide + H2O2 = hypoiodite + H2O. Functionally, heme-containing oxidoreductase which catalyzes the conversion of thiocyanate (SCN(-)) into antimicrobial agent hypothiocyanous acid (OSCN(-)) in the presence of hydrogen peroxide (H2O2). Also involved in the conversion of iodide (I(-)) into hypoiodite (IO(-)) in the presence of H2O2. Responsible for the inactivation of a wide range of micro-organisms and hence, important component of defense mechanism. Shows antibacterial properties against Pseudomonas aeruginosa. The lactoperoxidase-SCN(-)-H2O2 system shows antibacterial properties against Burkholderia cepacia and Haemophilus influenzae in vitro. Present in mammary and salivary gland secretions and may contribute to airway host defense against infection. May contribute to maintaining an appropriate H2O2 cellular level, therefore protecting cells from H2O2-caused injuries and inflammation. This is Lactoperoxidase from Homo sapiens (Human).